The following is a 204-amino-acid chain: Urease accessory protein UreG (204 aa).

Residue 13–20 participates in GTP binding; it reads GPVGSGKT.

The protein belongs to the SIMIBI class G3E GTPase family. UreG subfamily. Homodimer. UreD, UreF and UreG form a complex that acts as a GTP-hydrolysis-dependent molecular chaperone, activating the urease apoprotein by helping to assemble the nickel containing metallocenter of UreC. The UreE protein probably delivers the nickel.

The protein resides in the cytoplasm. Functionally, facilitates the functional incorporation of the urease nickel metallocenter. This process requires GTP hydrolysis, probably effectuated by UreG. The chain is Urease accessory protein UreG from Acinetobacter baylyi (strain ATCC 33305 / BD413 / ADP1).